The sequence spans 63 residues: Serine protease inhibitor 3 (63 aa).

A signal peptide spans 1–23; it reads MAKLLAVFLVLLIAALVCEQALA. 3 disulfides stabilise this stretch: Cys24–Cys39, Cys34–Cys52, and Cys37–Cys47. The region spanning 24–55 is the Pacifastin domain; the sequence is CTPGSRKYDGCNWCTCSSGGAWICTLKYCPPS.

This sequence belongs to the protease inhibitor I19 family. In terms of tissue distribution, expressed in hemolymph, ovaries, testes and fat body of adults but are absent in the gut. Also present in larval hemolymph and fat body.

The protein localises to the secreted. In terms of biological role, in vitro, active against alpha-chymotrypsin. The polypeptide is Serine protease inhibitor 3 (Schistocerca gregaria (Desert locust)).